A 306-amino-acid polypeptide reads, in one-letter code: Ornithine carbamoyltransferase (306 aa).

Carbamoyl phosphate contacts are provided by residues 46 to 49, glutamine 73, arginine 97, and 124 to 127; these read STRT and HPTQ. L-ornithine contacts are provided by residues asparagine 156, aspartate 220, and 224–225; that span reads SM. Residues 260 to 261 and arginine 288 each bind carbamoyl phosphate; that span reads CL.

It belongs to the aspartate/ornithine carbamoyltransferase superfamily. OTCase family.

The protein localises to the cytoplasm. The catalysed reaction is carbamoyl phosphate + L-ornithine = L-citrulline + phosphate + H(+). Its pathway is amino-acid biosynthesis; L-arginine biosynthesis; L-arginine from L-ornithine and carbamoyl phosphate: step 1/3. Reversibly catalyzes the transfer of the carbamoyl group from carbamoyl phosphate (CP) to the N(epsilon) atom of ornithine (ORN) to produce L-citrulline. In Campylobacter jejuni subsp. jejuni serotype O:23/36 (strain 81-176), this protein is Ornithine carbamoyltransferase.